Consider the following 118-residue polypeptide: Nitrogenase-stabilizing/protective protein NifW (118 aa).

It belongs to the NifW family. In terms of assembly, homotrimer; associates with NifD.

Its function is as follows. May protect the nitrogenase Fe-Mo protein from oxidative damage. The protein is Nitrogenase-stabilizing/protective protein NifW of Rhodopseudomonas palustris (strain BisB5).